The primary structure comprises 551 residues: Arginine--tRNA ligase (551 aa).

Residues 123-133 carry the 'HIGH' region motif; that stretch reads ANPTGPLTIGR.

Belongs to the class-I aminoacyl-tRNA synthetase family. As to quaternary structure, monomer.

Its subcellular location is the cytoplasm. The catalysed reaction is tRNA(Arg) + L-arginine + ATP = L-arginyl-tRNA(Arg) + AMP + diphosphate. This chain is Arginine--tRNA ligase, found in Chlorobium limicola (strain DSM 245 / NBRC 103803 / 6330).